The sequence spans 585 residues: Arginine--tRNA ligase (585 aa).

Positions 131-141 (ANPTGPMHVGH) match the 'HIGH' region motif.

It belongs to the class-I aminoacyl-tRNA synthetase family. In terms of assembly, monomer.

The protein resides in the cytoplasm. The enzyme catalyses tRNA(Arg) + L-arginine + ATP = L-arginyl-tRNA(Arg) + AMP + diphosphate. The protein is Arginine--tRNA ligase of Brucella anthropi (strain ATCC 49188 / DSM 6882 / CCUG 24695 / JCM 21032 / LMG 3331 / NBRC 15819 / NCTC 12168 / Alc 37) (Ochrobactrum anthropi).